We begin with the raw amino-acid sequence, 183 residues long: Dual-action ribosomal maturation protein DarP (183 aa).

The protein belongs to the DarP family.

The protein resides in the cytoplasm. Its function is as follows. Member of a network of 50S ribosomal subunit biogenesis factors which assembles along the 30S-50S interface, preventing incorrect 23S rRNA structures from forming. Promotes peptidyl transferase center (PTC) maturation. In Shigella flexneri, this protein is Dual-action ribosomal maturation protein DarP.